Here is a 273-residue protein sequence, read N- to C-terminus: Dermonecrotic toxin LhSicTox-alphaIA2avi (273 aa).

H5 is a catalytic residue. Residues E25 and D27 each coordinate Mg(2+). Residue H41 is the Nucleophile of the active site. Disulfide bonds link C45–C51 and C47–C190. D85 lines the Mg(2+) pocket.

This sequence belongs to the arthropod phospholipase D family. Class II subfamily. Mg(2+) serves as cofactor. As to expression, expressed by the venom gland.

Its subcellular location is the secreted. The catalysed reaction is an N-(acyl)-sphingosylphosphocholine = an N-(acyl)-sphingosyl-1,3-cyclic phosphate + choline. The enzyme catalyses an N-(acyl)-sphingosylphosphoethanolamine = an N-(acyl)-sphingosyl-1,3-cyclic phosphate + ethanolamine. It catalyses the reaction a 1-acyl-sn-glycero-3-phosphocholine = a 1-acyl-sn-glycero-2,3-cyclic phosphate + choline. It carries out the reaction a 1-acyl-sn-glycero-3-phosphoethanolamine = a 1-acyl-sn-glycero-2,3-cyclic phosphate + ethanolamine. In terms of biological role, dermonecrotic toxins cleave the phosphodiester linkage between the phosphate and headgroup of certain phospholipids (sphingolipid and lysolipid substrates), forming an alcohol (often choline) and a cyclic phosphate. This toxin acts on sphingomyelin (SM). It may also act on ceramide phosphoethanolamine (CPE), lysophosphatidylcholine (LPC) and lysophosphatidylethanolamine (LPE), but not on lysophosphatidylserine (LPS), and lysophosphatidylglycerol (LPG). It acts by transphosphatidylation, releasing exclusively cyclic phosphate products as second products. Induces dermonecrosis, hemolysis, increased vascular permeability, edema, inflammatory response, and platelet aggregation. In Loxosceles hirsuta (Recluse spider), this protein is Dermonecrotic toxin LhSicTox-alphaIA2avi.